The following is a 299-amino-acid chain: Ribosomal protein uL3 glutamine methyltransferase (299 aa).

This sequence belongs to the protein N5-glutamine methyltransferase family. PrmB subfamily.

The enzyme catalyses L-glutaminyl-[ribosomal protein uL3] + S-adenosyl-L-methionine = N(5)-methyl-L-glutaminyl-[ribosomal protein uL3] + S-adenosyl-L-homocysteine + H(+). In terms of biological role, methylates large ribosomal subunit protein uL3 on a specific glutamine residue. The sequence is that of Ribosomal protein uL3 glutamine methyltransferase from Neisseria gonorrhoeae (strain ATCC 700825 / FA 1090).